A 64-amino-acid chain; its full sequence is U-poneritoxin(01)-Om1a (64 aa).

A signal peptide spans Met-1 to Ala-27. Positions Asp-28–Ala-45 are excised as a propeptide. Met-62 bears the Methionine amide mark.

Truncated sequences of this peptide have also been found in the venom. It is possible they have been cleaved in the venom. In terms of tissue distribution, expressed by the venom gland.

It is found in the secreted. Its function is as follows. Antimicrobial peptide with activities against E.coli (MIC=1.3 uM), S.aureus (MIC=3.1 uM), and S.cerevisiae (MIC=50 uM). Also shows histamine-releasing activity (32.9% at 10 uM). Does not show hemolytic activity, even at 50 uM. It is a short peptide for which no alpha-helical region has been predicted. This chain is U-poneritoxin(01)-Om1a, found in Odontomachus monticola (Trap-jaw ant).